The primary structure comprises 186 residues: GPI-anchored hemophore ARB_02741 (186 aa).

The N-terminal stretch at 1 to 18 (MKFSQAVIALAAATVVSA) is a signal peptide. The CFEM domain maps to 19 to 108 (QLPDVPQCSL…SSKPSEPSTS (90 aa)). 4 disulfide bridges follow: Cys-26–Cys-67, Cys-30–Cys-62, Cys-40–Cys-48, and Cys-50–Cys-83. Heme is bound at residue Asp-45. A disordered region spans residues 89–159 (PVSIPPVEES…NTGVPTQSTP (71 aa)). Residues 96–131 (EESSSKPSEPSTSEAPTASPTESTPAPTTPAPTGTG) are compositionally biased toward low complexity. Positions 132–144 (SPSGTGAPGGPSG) are enriched in gly residues. Residues 148–159 (FTNTGVPTQSTP) show a composition bias toward polar residues. Gly-163 is lipidated: GPI-anchor amidated glycine. Positions 164-186 (AASGLSANIGGMGAAILAIAAYL) are cleaved as a propeptide — removed in mature form.

This sequence belongs to the RBT5 family. The GPI-anchor is attached to the protein in the endoplasmic reticulum and serves to target the protein to the cell surface. There, the glucosamine-inositol phospholipid moiety is cleaved off and the GPI-modified mannoprotein is covalently attached via its lipidless GPI glycan remnant to the 1,6-beta-glucan of the outer cell wall layer.

Its subcellular location is the secreted. It is found in the cell wall. It localises to the cell membrane. Its function is as follows. GPI-anchored cell wall protein involved in stabilizing the cell wall. The polypeptide is GPI-anchored hemophore ARB_02741 (Arthroderma benhamiae (strain ATCC MYA-4681 / CBS 112371) (Trichophyton mentagrophytes)).